Reading from the N-terminus, the 147-residue chain is Small ribosomal subunit protein bS6m (147 aa).

Belongs to the bacterial ribosomal protein bS6 family. As to quaternary structure, component of the mitochondrial ribosome small subunit (28S) which comprises a 12S rRNA and about 30 distinct proteins.

The protein localises to the mitochondrion. This Drosophila melanogaster (Fruit fly) protein is Small ribosomal subunit protein bS6m (mRpS6).